The sequence spans 183 residues: Senescence-associated protein DIN1 (183 aa).

The 101-residue stretch at 83–183 folds into the Rhodanese domain; it reads AQAGYKHLDV…WTENELPVEE (101 aa).

In terms of biological role, is thought to act during the early stages of leaf senescence. The polypeptide is Senescence-associated protein DIN1 (DIN1) (Raphanus sativus (Radish)).